The chain runs to 156 residues: MSRRRKAEKREVLPDAKFGDVVLTKFMNCLMYDGKKSVAESIVYGALDRIEAKAKQNALQLFHDALNNVRPYLEVRSRRVGGATYQVPVEVRSERAQALAIRWIISAARGRSEDTMTERLSAELLDAANQRGTAVKKREDTHRMAEANKAFSHYRW.

Belongs to the universal ribosomal protein uS7 family. Part of the 30S ribosomal subunit. Contacts proteins S9 and S11.

Its function is as follows. One of the primary rRNA binding proteins, it binds directly to 16S rRNA where it nucleates assembly of the head domain of the 30S subunit. Is located at the subunit interface close to the decoding center, probably blocks exit of the E-site tRNA. This chain is Small ribosomal subunit protein uS7, found in Rhodospirillum centenum (strain ATCC 51521 / SW).